The following is a 554-amino-acid chain: Hydroxylamine reductase (554 aa).

C3, C6, C18, and C25 together coordinate [2Fe-2S] cluster. Hybrid [4Fe-2O-2S] cluster-binding residues include H252, E276, C320, C408, C436, C461, E495, and K497. C408 carries the post-translational modification Cysteine persulfide.

This sequence belongs to the HCP family. [2Fe-2S] cluster is required as a cofactor. The cofactor is hybrid [4Fe-2O-2S] cluster.

The protein resides in the cytoplasm. It catalyses the reaction A + NH4(+) + H2O = hydroxylamine + AH2 + H(+). Catalyzes the reduction of hydroxylamine to form NH(3) and H(2)O. The protein is Hydroxylamine reductase of Shewanella loihica (strain ATCC BAA-1088 / PV-4).